Reading from the N-terminus, the 369-residue chain is Maltose/maltodextrin import ATP-binding protein MalK (369 aa).

The region spanning 4–234 (VTLRNVCKSY…PKNRFVAGFI (231 aa)) is the ABC transporter domain. An ATP-binding site is contributed by 36–43 (GPSGCGKS).

It belongs to the ABC transporter superfamily. Maltooligosaccharide importer (TC 3.A.1.1.1) family. In terms of assembly, the complex is composed of two ATP-binding proteins (MalK), two transmembrane proteins (MalG and MalK) and a solute-binding protein (MalE).

It is found in the cell inner membrane. The enzyme catalyses D-maltose(out) + ATP + H2O = D-maltose(in) + ADP + phosphate + H(+). Functionally, part of the ABC transporter complex MalEFGK involved in maltose/maltodextrin import. Responsible for energy coupling to the transport system. This is Maltose/maltodextrin import ATP-binding protein MalK from Aliivibrio fischeri (strain ATCC 700601 / ES114) (Vibrio fischeri).